The primary structure comprises 526 residues: Medium/long-chain-fatty-acid--[acyl-carrier-protein] ligase MbtM (526 aa).

2 positions are modified to N6-acetyllysine; by Pat: Lys260 and Lys511.

Belongs to the ATP-dependent AMP-binding enzyme family. In terms of processing, acetylated on Lys-511 and Lys-260 by Pat. Lys-511 is the major acetylation site. Acetylation results in the inactivation of the enzyme.

The catalysed reaction is a long-chain fatty acid + holo-[ACP] + ATP = a long-chain fatty acyl-[ACP] + AMP + diphosphate. It carries out the reaction a medium-chain fatty acid + holo-[ACP] + ATP = a medium-chain fatty acyl-[ACP] + AMP + diphosphate. It catalyses the reaction hexadecanoate + holo-[ACP] + ATP = hexadecanoyl-[ACP] + AMP + diphosphate. The enzyme catalyses hexadecanoate + ATP + H(+) = hexadecanoyl-AMP + diphosphate. The catalysed reaction is hexadecanoyl-AMP + holo-[ACP] = hexadecanoyl-[ACP] + AMP + H(+). It carries out the reaction dodecanoate + holo-[ACP] + ATP = dodecanoyl-[ACP] + AMP + diphosphate. It catalyses the reaction dodecanoate + ATP + H(+) = dodecanoyl-AMP + diphosphate. The enzyme catalyses dodecanoyl-AMP + holo-[ACP] = dodecanoyl-[ACP] + AMP + H(+). Its pathway is siderophore biosynthesis; mycobactin biosynthesis. With respect to regulation, reversibly inactivated by post-translational acetylation by Pat in a cAMP-dependent manner and reactivated by Sir2 deacylase. Activates lipidic moieties required for mycobactin biosynthesis. Converts medium- to long-chain aliphatic fatty acids into acyl adenylate, which is further transferred on to the phosphopantetheine arm of the carrier protein MbtL. Shows a strong preference for palmitic acid (C16) and cannot use short-chain fatty acids. Proceeds via a Bi Uni Uni Bi ping-pong mechanism. During the first half-reaction (adenylation), fatty acid binds first to the free enzyme, followed by ATP and the release of pyrophosphate to form the adenylate intermediate. During the second half-reaction (ligation), holo-MbtL binds to the enzyme followed by the release of products AMP and acylated MbtL. The protein is Medium/long-chain-fatty-acid--[acyl-carrier-protein] ligase MbtM of Mycolicibacterium smegmatis (strain ATCC 700084 / mc(2)155) (Mycobacterium smegmatis).